The chain runs to 258 residues: Imidazole glycerol phosphate synthase subunit HisF (258 aa).

Catalysis depends on residues aspartate 11 and aspartate 130.

The protein belongs to the HisA/HisF family. Heterodimer of HisH and HisF.

Its subcellular location is the cytoplasm. It catalyses the reaction 5-[(5-phospho-1-deoxy-D-ribulos-1-ylimino)methylamino]-1-(5-phospho-beta-D-ribosyl)imidazole-4-carboxamide + L-glutamine = D-erythro-1-(imidazol-4-yl)glycerol 3-phosphate + 5-amino-1-(5-phospho-beta-D-ribosyl)imidazole-4-carboxamide + L-glutamate + H(+). It functions in the pathway amino-acid biosynthesis; L-histidine biosynthesis; L-histidine from 5-phospho-alpha-D-ribose 1-diphosphate: step 5/9. Functionally, IGPS catalyzes the conversion of PRFAR and glutamine to IGP, AICAR and glutamate. The HisF subunit catalyzes the cyclization activity that produces IGP and AICAR from PRFAR using the ammonia provided by the HisH subunit. This is Imidazole glycerol phosphate synthase subunit HisF from Serratia proteamaculans (strain 568).